A 259-amino-acid chain; its full sequence is tRNA pseudouridine synthase A (259 aa).

The active-site Nucleophile is the Asp52. Residue Tyr110 participates in substrate binding.

The protein belongs to the tRNA pseudouridine synthase TruA family. As to quaternary structure, homodimer.

The enzyme catalyses uridine(38/39/40) in tRNA = pseudouridine(38/39/40) in tRNA. Functionally, formation of pseudouridine at positions 38, 39 and 40 in the anticodon stem and loop of transfer RNAs. In Coprothermobacter proteolyticus (strain ATCC 35245 / DSM 5265 / OCM 4 / BT), this protein is tRNA pseudouridine synthase A.